The chain runs to 540 residues: Chaperonin GroEL (540 aa).

ATP contacts are provided by residues 30–33 (TLGP), K51, 87–91 (DGTTT), G415, 479–481 (NAA), and D495.

It belongs to the chaperonin (HSP60) family. In terms of assembly, forms a cylinder of 14 subunits composed of two heptameric rings stacked back-to-back. Interacts with the co-chaperonin GroES.

The protein resides in the cytoplasm. It catalyses the reaction ATP + H2O + a folded polypeptide = ADP + phosphate + an unfolded polypeptide.. In terms of biological role, together with its co-chaperonin GroES, plays an essential role in assisting protein folding. The GroEL-GroES system forms a nano-cage that allows encapsulation of the non-native substrate proteins and provides a physical environment optimized to promote and accelerate protein folding. The chain is Chaperonin GroEL from Raoultella planticola (Klebsiella planticola).